We begin with the raw amino-acid sequence, 319 residues long: Acetyl-coenzyme A carboxylase carboxyl transferase subunit alpha (319 aa).

A CoA carboxyltransferase C-terminal domain is found at 32 to 293; that stretch reads NVETEVRALR…KAVLLNELDA (262 aa).

This sequence belongs to the AccA family. In terms of assembly, acetyl-CoA carboxylase is a heterohexamer composed of biotin carboxyl carrier protein (AccB), biotin carboxylase (AccC) and two subunits each of ACCase subunit alpha (AccA) and ACCase subunit beta (AccD).

It is found in the cytoplasm. It carries out the reaction N(6)-carboxybiotinyl-L-lysyl-[protein] + acetyl-CoA = N(6)-biotinyl-L-lysyl-[protein] + malonyl-CoA. It functions in the pathway lipid metabolism; malonyl-CoA biosynthesis; malonyl-CoA from acetyl-CoA: step 1/1. Component of the acetyl coenzyme A carboxylase (ACC) complex. First, biotin carboxylase catalyzes the carboxylation of biotin on its carrier protein (BCCP) and then the CO(2) group is transferred by the carboxyltransferase to acetyl-CoA to form malonyl-CoA. The sequence is that of Acetyl-coenzyme A carboxylase carboxyl transferase subunit alpha from Xanthomonas oryzae pv. oryzae (strain MAFF 311018).